Reading from the N-terminus, the 432-residue chain is Gamma-glutamyl phosphate reductase (432 aa).

The protein belongs to the gamma-glutamyl phosphate reductase family.

It localises to the cytoplasm. The catalysed reaction is L-glutamate 5-semialdehyde + phosphate + NADP(+) = L-glutamyl 5-phosphate + NADPH + H(+). It functions in the pathway amino-acid biosynthesis; L-proline biosynthesis; L-glutamate 5-semialdehyde from L-glutamate: step 2/2. Functionally, catalyzes the NADPH-dependent reduction of L-glutamate 5-phosphate into L-glutamate 5-semialdehyde and phosphate. The product spontaneously undergoes cyclization to form 1-pyrroline-5-carboxylate. The chain is Gamma-glutamyl phosphate reductase from Methylorubrum extorquens (strain PA1) (Methylobacterium extorquens).